A 313-amino-acid chain; its full sequence is Beta-lactamase (313 aa).

Positions 1-15 (MQRIGVTDYTILGTV) are cleaved as a signal peptide. Residue Ser190 is the Acyl-ester intermediate of the active site.

The protein belongs to the class-C beta-lactamase family.

The enzyme catalyses a beta-lactam + H2O = a substituted beta-amino acid. Its function is as follows. Upon expression in E.coli enables the latter to utilize penicillin as a carbon source. This chain is Beta-lactamase (penA), found in Burkholderia multivorans (strain ATCC 17616 / 249).